A 758-amino-acid polypeptide reads, in one-letter code: 5-methyltetrahydropteroyltriglutamate--homocysteine methyltransferase (758 aa).

Residues 16–19 and Lys116 each bind 5-methyltetrahydropteroyltri-L-glutamate; that span reads RELK. L-homocysteine contacts are provided by residues 436 to 438 and Glu489; that span reads IGS. L-methionine-binding positions include 436-438 and Glu489; that span reads IGS. 5-methyltetrahydropteroyltri-L-glutamate-binding positions include 520-521 and Trp566; that span reads RC. An L-homocysteine-binding site is contributed by Asp604. An L-methionine-binding site is contributed by Asp604. Glu610 is a binding site for 5-methyltetrahydropteroyltri-L-glutamate. 3 residues coordinate Zn(2+): His646, Cys648, and Glu670. The active-site Proton donor is His699. Zn(2+) is bound at residue Cys731.

The protein belongs to the vitamin-B12 independent methionine synthase family. The cofactor is Zn(2+).

It carries out the reaction 5-methyltetrahydropteroyltri-L-glutamate + L-homocysteine = tetrahydropteroyltri-L-glutamate + L-methionine. Its pathway is amino-acid biosynthesis; L-methionine biosynthesis via de novo pathway; L-methionine from L-homocysteine (MetE route): step 1/1. In terms of biological role, catalyzes the transfer of a methyl group from 5-methyltetrahydrofolate to homocysteine resulting in methionine formation. This is 5-methyltetrahydropteroyltriglutamate--homocysteine methyltransferase from Xylella fastidiosa (strain M12).